Consider the following 527-residue polypeptide: Putative ABC transporter peptide-binding protein BMEII0859 (527 aa).

The first 23 residues, 1–23 (MRLRNFYSALALSAAVFAGPLYA), serve as a signal peptide directing secretion.

It belongs to the bacterial solute-binding protein 5 family. The complex is composed of two ATP-binding proteins (BMEII0863 and BMEII0864), two transmembrane proteins (BMEII0860 and BMEII0861) and a solute-binding protein (BMEII0859).

The protein localises to the periplasm. Probably part of an ABC transporter complex that could be involved in peptide import. This is Putative ABC transporter peptide-binding protein BMEII0859 from Brucella melitensis biotype 1 (strain ATCC 23456 / CCUG 17765 / NCTC 10094 / 16M).